Here is a 194-residue protein sequence, read N- to C-terminus: dTTP/UTP pyrophosphatase (194 aa).

The Proton acceptor role is filled by Asp66.

Belongs to the Maf family. YhdE subfamily. A divalent metal cation serves as cofactor.

The protein resides in the cytoplasm. The catalysed reaction is dTTP + H2O = dTMP + diphosphate + H(+). It carries out the reaction UTP + H2O = UMP + diphosphate + H(+). Its function is as follows. Nucleoside triphosphate pyrophosphatase that hydrolyzes dTTP and UTP. May have a dual role in cell division arrest and in preventing the incorporation of modified nucleotides into cellular nucleic acids. The protein is dTTP/UTP pyrophosphatase of Anaeromyxobacter dehalogenans (strain 2CP-1 / ATCC BAA-258).